The following is a 250-amino-acid chain: Uridylate kinase (250 aa).

19–22 (KLSG) serves as a coordination point for ATP. Glycine 61 provides a ligand contact to UMP. Residues glycine 62 and arginine 66 each coordinate ATP. UMP-binding positions include aspartate 81 and 142–149 (TGNPFFTT). Positions 169, 170, 175, and 178 each coordinate ATP.

It belongs to the UMP kinase family. Homohexamer.

The protein localises to the cytoplasm. It catalyses the reaction UMP + ATP = UDP + ADP. It participates in pyrimidine metabolism; CTP biosynthesis via de novo pathway; UDP from UMP (UMPK route): step 1/1. Its activity is regulated as follows. Inhibited by UTP. Catalyzes the reversible phosphorylation of UMP to UDP. The chain is Uridylate kinase from Rhodospirillum rubrum (strain ATCC 11170 / ATH 1.1.1 / DSM 467 / LMG 4362 / NCIMB 8255 / S1).